We begin with the raw amino-acid sequence, 3177 residues long: Proliferation marker protein Ki-67 (3177 aa).

The region spanning 27–76 is the FHA domain; that stretch reads CLFGRSIECDIRIQLPVVSKRHCKIEVKEQEAILYNFSSTNPTQVNGVTI. Composition is skewed to basic and acidic residues over residues 98-107 and 116-126; these read EDGNHEDGSK and LGKEPSRRASR. 2 disordered regions span residues 98 to 442 and 473 to 572; these read EDGN…PGLS and RPEL…ASIS. Residues Ser-125, Ser-128, and Ser-162 each carry the phosphoserine modification. 2 stretches are compositionally biased toward polar residues: residues 165–177 and 202–221; these read SDGS…QDSS and STGS…LSNS. Residues 235–263 show a composition bias toward basic and acidic residues; that stretch reads MKEELDVKSQKSCRKSEPQPDRAAEESRE. Residue Lys-236 forms a Glycyl lysine isopeptide (Lys-Gly) (interchain with G-Cter in SUMO2) linkage. Phosphoserine is present on residues Ser-250, Ser-276, Ser-277, Ser-286, and Ser-287. Residues 276 to 286 are compositionally biased toward polar residues; it reads SSGSTPVTAAS. Phosphothreonine occurs at positions 307 and 316. Phosphoserine is present on residues Ser-321, Ser-337, Ser-373, Ser-498, Ser-503, and Ser-588. The positively charged patch (CP) stretch occupies residues 455–618; the sequence is KSEGMPMKRR…VKQTQTKVAK (164 aa). One can recognise a PP1-binding domain in the interval 462 to 509; the sequence is KRRRVSFGGHLRPELFDENLPPNTPLKRGETPTKRKSLGTHSPAVLKT. The interval 614–652 is disordered; it reads TKVAKHVPQKQTSKRQRRPSTPKKPTSNLHNQFTTGHAN. Over residues 616–634 the composition is skewed to basic residues; it reads VAKHVPQKQTSKRQRRPST. Polar residues predominate over residues 636–652; it reads KKPTSNLHNQFTTGHAN. The residue at position 701 (Thr-701) is a Phosphothreonine. Disordered regions lie at residues 793–815, 835–901, and 956–989; these read LEKK…SKLR, VLAE…LGSQ, and KHSP…DKPI. Residues 855 to 864 show a composition bias toward polar residues; sequence DQQVQDNENA. Basic and acidic residues-rich tracts occupy residues 867-882 and 975-989; these read RCKE…EKTS and LKEH…DKPI. 16 K167R repeats span residues 994 to 1101, 1108 to 1216, 1228 to 1336, 1348 to 1450, 1461 to 1569, 1582 to 1684, 1696 to 1806, 1817 to 1925, 1937 to 2046, 2059 to 2163, 2175 to 2284, 2296 to 2405, 2419 to 2526, 2537 to 2639, 2643 to 2748, and 2762 to 2870; these read TRVL…FISP, KKIP…FQTP, SAKI…FQTP, SAKM…FQIP, KTKK…FQMP, TMLA…LFQT, KQTR…FQTP, ETTK…FQTP, VKMS…FQTP, SAKM…FQTP, SAKI…VFQT, AKLP…CQAP, KTPK…SFQE, KRIS…PIQT, and TQMP…ITQI. Residues Lys-1013 and Lys-1026 each participate in a glycyl lysine isopeptide (Lys-Gly) (interchain with G-Cter in SUMO2) cross-link. Ser-1062 bears the Phosphoserine mark. Residue Lys-1082 forms a Glycyl lysine isopeptide (Lys-Gly) (interchain with G-Cter in SUMO1); alternate linkage. Lys-1082 participates in a covalent cross-link: Glycyl lysine isopeptide (Lys-Gly) (interchain with G-Cter in SUMO2); alternate. 2 disordered regions span residues 1109–1321 and 1334–1410; these read KIPS…IRAQ and QTPA…ENDC. Ser-1114 carries the phosphoserine modification. Residues 1114 to 1127 show a composition bias toward polar residues; it reads SPHTQPVRTPASTK. Thr-1122 is subject to Phosphothreonine. Ser-1125 is subject to Phosphoserine. Thr-1150 carries the phosphothreonine modification. Position 1152 is a phosphoserine (Ser-1152). Phosphothreonine is present on residues Thr-1159 and Thr-1175. A Phosphoserine modification is found at Ser-1189. A Phosphothreonine modification is found at Thr-1215. Position 1235 is a phosphoserine (Ser-1235). A phosphothreonine mark is found at Thr-1243, Thr-1279, Thr-1295, Thr-1307, and Thr-1315. Residues 1308–1317 show a composition bias toward basic residues; that stretch reads GHKRRPRTPK. Residue Lys-1317 forms a Glycyl lysine isopeptide (Lys-Gly) (interchain with G-Cter in SUMO2) linkage. A Phosphothreonine modification is found at Thr-1335. A compositionally biased stretch (polar residues) spans 1353–1368; that stretch reads LESSQAEPVKTPASTK. At Ser-1356 the chain carries Phosphoserine. The residue at position 1363 (Thr-1363) is a Phosphothreonine. Residue Ser-1366 is modified to Phosphoserine. A compositionally biased stretch (basic and acidic residues) spans 1371–1384; it reads SKTDLSKVDVREDP. Phosphothreonine is present on residues Thr-1400 and Thr-1416. Ser-1469 is subject to Phosphoserine. Thr-1477 is subject to Phosphothreonine. Ser-1480 is subject to Phosphoserine. Thr-1513 bears the Phosphothreonine mark. The segment at 1526 to 1550 is disordered; the sequence is RKPAKRKLDSTAGMPNSKRMRCSSK. 2 positions are modified to phosphoserine: Ser-1542 and Ser-1587. Lys-1609 carries the post-translational modification N6-acetyllysine. Lys-1668 participates in a covalent cross-link: Glycyl lysine isopeptide (Lys-Gly) (interchain with G-Cter in SUMO2). A phosphothreonine mark is found at Thr-1684 and Thr-1712. At Ser-1734 the chain carries Phosphoserine. Positions 1749–1797 are disordered; sequence IPIGPEDDTENKGVKESTPQTLDSSASRTVSKRQQGAHEERPQFSGDLF. Positions 1765-1782 are enriched in polar residues; it reads STPQTLDSSASRTVSKRQ. Thr-1766 carries the post-translational modification Phosphothreonine. Ser-1779 carries the post-translational modification Phosphoserine. Phosphothreonine is present on Thr-1805. Position 1825 is a phosphoserine (Ser-1825). Thr-1859, Thr-1868, Thr-1884, and Thr-1924 each carry phosphothreonine. A disordered region spans residues 1925 to 2033; it reads PAGASDPVSV…QTPKIRAQPL (109 aa). Ser-1944 is modified (phosphoserine). Lys-1966 carries the N6-acetyllysine modification. Thr-1989, Thr-2005, and Thr-2025 each carry phosphothreonine. A Glycyl lysine isopeptide (Lys-Gly) (interchain with G-Cter in SUMO1); alternate cross-link involves residue Lys-2027. Lys-2027 is covalently cross-linked (Glycyl lysine isopeptide (Lys-Gly) (interchain with G-Cter in SUMO2); alternate). Thr-2045 is modified (phosphothreonine). The tract at residues 2047-2112 is disordered; sequence AGANDSVTVE…SPGTPAPVQE (66 aa). Residues 2063–2078 are compositionally biased toward polar residues; sequence LESSQAEPVKTPASTK. Ser-2065 carries the post-translational modification Phosphoserine. Thr-2073 carries the post-translational modification Phosphothreonine. Phosphoserine is present on residues Ser-2076, Ser-2095, and Ser-2103. Positions 2088-2101 are enriched in basic and acidic residues; that stretch reads VDVREDPSILEKKT. Phosphothreonine occurs at positions 2106 and 2122. A disordered region spans residues 2124-2343; sequence KQKLDFTGNS…PLSKSSCASQ (220 aa). Residues 2135–2144 show a composition bias toward basic residues; that stretch reads GHKRRPRTPK. Position 2162 is a phosphothreonine (Thr-2162). Polar residues predominate over residues 2180–2195; sequence LESSQAKPVKTPASTK. At Ser-2182 the chain carries Phosphoserine. A Phosphothreonine modification is found at Thr-2190. Ser-2198 bears the Phosphoserine mark. Thr-2218 carries the post-translational modification Phosphothreonine. Ser-2220 is subject to Phosphoserine. Thr-2227, Thr-2243, and Thr-2283 each carry phosphothreonine. A Phosphoserine modification is found at Ser-2303. Phosphothreonine is present on residues Thr-2311 and Thr-2348. Positions 2378–2390 are enriched in basic residues; sequence RGKRQQRSCKKRS. The segment at 2378 to 2447 is disordered; the sequence is RGKRQQRSCK…RRQARTGLRK (70 aa). Phosphoserine occurs at positions 2390 and 2392. Thr-2405 is subject to Phosphothreonine. 2 positions are modified to phosphoserine: Ser-2423 and Ser-2425. Residue Lys-2451 forms a Glycyl lysine isopeptide (Lys-Gly) (interchain with G-Cter in SUMO1) linkage. A phosphoserine mark is found at Ser-2464, Ser-2487, Ser-2545, and Ser-2592. Basic and acidic residues predominate over residues 2538 to 2547; it reads TPKMPDKSPE. Disordered stretches follow at residues 2538–2828 and 2879–3160; these read TPKM…QVSK and HDTS…DAKT. Over residues 2605 to 2622 the composition is skewed to polar residues; it reads VQKQDPSVSLTGRRNQPR. Ser-2649 carries the post-translational modification Phosphoserine. Composition is skewed to basic and acidic residues over residues 2673-2697 and 2704-2714; these read GVKE…KEPV and EEVKKSTKQKI. A Glycyl lysine isopeptide (Lys-Gly) (interchain with G-Cter in SUMO1); alternate cross-link involves residue Lys-2675. Lys-2675 participates in a covalent cross-link: Glycyl lysine isopeptide (Lys-Gly) (interchain with G-Cter in SUMO2); alternate. Composition is skewed to polar residues over residues 2764-2781 and 2883-2892; these read MPCN…QSSP and ILKSTQQQKP. Phosphoserine is present on residues Ser-2768 and Ser-2780. Positions 2907-2923 are enriched in basic and acidic residues; sequence ASKEDPKEVLVDTRDHA. A Glycyl lysine isopeptide (Lys-Gly) (interchain with G-Cter in SUMO2) cross-link involves residue Lys-2909. Lys-2928 is modified (N6-acetyllysine). Basic and acidic residues predominate over residues 2959–2971; that stretch reads EATDEKPVPEKKR. Position 2973–2980 (2973–2980) interacts with ATP; that stretch reads ASSKRHVS. Ser-2980 is subject to Phosphoserine. Basic and acidic residues predominate over residues 3008 to 3018; the sequence is KTEEMEAKREN. Thr-3021 carries the post-translational modification Phosphothreonine. Residues 3039–3057 are compositionally biased toward basic and acidic residues; it reads PKFDASAENVGIKKNEKTM. The span at 3058-3067 shows a compositional bias: polar residues; the sequence is KTASQETELQ. Ser-3061 bears the Phosphoserine mark. 2 stretches are compositionally biased toward basic and acidic residues: residues 3118–3132 and 3140–3160; these read PQEE…DVRC and VALD…DAKT.

As to quaternary structure, interacts with KIF15. Interacts (via the FHA domain) with NIFK. Interacts with PPP1CC. Component of a complex at least composed of ZNF335, HCFC1, CCAR2, EMSY, MKI67, RBBP5, ASH2L and WDR5; the complex is formed as a result of interactions between components of a nuclear receptor-mediated transcription complex and a histone methylation complex. Interacts with ZNF335. Post-translationally, hyperphosphorylated by CDK1 in mitosis; hyperphosphorylatiom prevents undergoing liquid-liquid phase separation. Dephosphorylated by PPP1CC at the onset of anaphase. Dephosphorylation by protein phosphatase 2A (PP2A) and simultaneous exposure of the positively charged patch (CP) during mitotic exit induce the RNA-dependent formation of a liquid-like condensed phase on the chromosome surface. In terms of processing, ubiquitinated by the APC/C complex after neuronal progenitors exit mitosis during brain development, leading to clearance from constitutive heterochromatin. Mainly present in proliferating cells (at protein level).

The protein resides in the chromosome. The protein localises to the nucleus. It localises to the nucleolus. Protein that associates with the surface of mitotic chromosomes and acts both as a chromosome repellent during early mitosis and chromosome attractant during late mitosis. Required to maintain individual mitotic chromosomes dispersed in the cytoplasm following nuclear envelope disassembly. During early mitosis, relocalizes from nucleoli to the chromosome surface where it forms extended brush structures that cover a substantial fraction of the chromosome surface. The MKI67 brush structure prevents chromosomes from collapsing into a single chromatin mass by forming a steric and electrostatic charge barrier: the protein has a high net electrical charge and acts as a surfactant, dispersing chromosomes and enabling independent chromosome motility. During mitotic anaphase, the MKI67 brush structure collapses and MKI67 switches from a chromosome repellent to a chromosome attractant to promote chromosome clustering and facilitate the exclusion of large cytoplasmic particles from the future nuclear space. Mechanistically, dephosphorylation during mitotic exit and simultaneous exposure of a conserved basic patch induce the RNA-dependent formation of a liquid-like condensed phase on the chromosome surface, promoting coalescence of neighboring chromosome surfaces and clustering of chromosomes. Binds premature ribosomal RNAs during anaphase; promoting liquid-liquid phase separation. Binds DNA, with a preference for supercoiled DNA and AT-rich DNA. Does not contribute to the internal structure of mitotic chromosomes. May play a role in chromatin organization; it is however unclear whether it plays a direct role in chromatin organization or whether it is an indirect consequence of its function in mitotic chromosome. The chain is Proliferation marker protein Ki-67 from Mus musculus (Mouse).